The chain runs to 266 residues: Probable phosphoadenosine phosphosulfate reductase (266 aa).

A disordered region spans residues 219-246; that stretch reads TQPVREGEDERAGRWRGREKTECGLHSH. The span at 223 to 243 shows a compositional bias: basic and acidic residues; it reads REGEDERAGRWRGREKTECGL.

It belongs to the PAPS reductase family. CysH subfamily.

The protein resides in the cytoplasm. It is found in the nucleus. It catalyses the reaction [thioredoxin]-disulfide + sulfite + adenosine 3',5'-bisphosphate + 2 H(+) = [thioredoxin]-dithiol + 3'-phosphoadenylyl sulfate. Its pathway is sulfur metabolism; hydrogen sulfide biosynthesis; sulfite from sulfate: step 3/3. The NADP dependent reduction of PAPS into sulfite involves thioredoxin which probably plays the role of a thiol carrier. Required for methionine synthesis. The polypeptide is Probable phosphoadenosine phosphosulfate reductase (met16) (Schizosaccharomyces pombe (strain 972 / ATCC 24843) (Fission yeast)).